The chain runs to 348 residues: Dihydroorotase (348 aa).

Zn(2+) is bound by residues H14 and H16. Residues 16–18 and N42 contribute to the substrate site; that span reads HLR. Zn(2+)-binding residues include K100, H137, and H175. K100 carries the N6-carboxylysine modification. H137 contacts substrate. L220 contacts substrate. Position 248 (D248) interacts with Zn(2+). D248 is an active-site residue. Substrate contacts are provided by H252 and A264.

The protein belongs to the metallo-dependent hydrolases superfamily. DHOase family. Class II DHOase subfamily. Homodimer. Requires Zn(2+) as cofactor.

The catalysed reaction is (S)-dihydroorotate + H2O = N-carbamoyl-L-aspartate + H(+). It participates in pyrimidine metabolism; UMP biosynthesis via de novo pathway; (S)-dihydroorotate from bicarbonate: step 3/3. Its function is as follows. Catalyzes the reversible cyclization of carbamoyl aspartate to dihydroorotate. In Pseudomonas putida (strain W619), this protein is Dihydroorotase.